Consider the following 243-residue polypeptide: tRNA pseudouridine synthase A (243 aa).

Aspartate 51 serves as the catalytic Nucleophile. A substrate-binding site is contributed by tyrosine 111.

It belongs to the tRNA pseudouridine synthase TruA family. Homodimer.

The catalysed reaction is uridine(38/39/40) in tRNA = pseudouridine(38/39/40) in tRNA. Formation of pseudouridine at positions 38, 39 and 40 in the anticodon stem and loop of transfer RNAs. In Neorickettsia sennetsu (strain ATCC VR-367 / Miyayama) (Ehrlichia sennetsu), this protein is tRNA pseudouridine synthase A.